The chain runs to 436 residues: Coiled-coil domain-containing protein 71 (436 aa).

The disordered stretch occupies residues Ala-95 to Val-119. Polar residues predominate over residues Thr-105–Leu-116. Residue Ser-129 is modified to Phosphoserine. Disordered regions lie at residues Leu-210–Arg-258 and Ala-314–Arg-405. The stretch at Lys-264–Lys-334 forms a coiled coil. The span at Lys-329–Lys-340 shows a compositional bias: basic residues. Residues Gln-344 to Val-359 are compositionally biased toward polar residues. The segment covering Pro-373–Ala-386 has biased composition (basic residues).

This Rattus norvegicus (Rat) protein is Coiled-coil domain-containing protein 71 (Ccdc71).